Here is a 438-residue protein sequence, read N- to C-terminus: DNA polymerase IV 1 (438 aa).

The UmuC domain occupies 46–226 (LAHIDCDAFY…KPVTMIWGVG (181 aa)). Mg(2+) contacts are provided by Asp-50 and Asp-143. The active site involves Glu-144.

The protein belongs to the DNA polymerase type-Y family. As to quaternary structure, monomer. Mg(2+) serves as cofactor.

It is found in the cytoplasm. It catalyses the reaction DNA(n) + a 2'-deoxyribonucleoside 5'-triphosphate = DNA(n+1) + diphosphate. Its function is as follows. Poorly processive, error-prone DNA polymerase involved in untargeted mutagenesis. Copies undamaged DNA at stalled replication forks, which arise in vivo from mismatched or misaligned primer ends. These misaligned primers can be extended by PolIV. Exhibits no 3'-5' exonuclease (proofreading) activity. May be involved in translesional synthesis, in conjunction with the beta clamp from PolIII. The protein is DNA polymerase IV 1 (dinB1) of Mesorhizobium japonicum (strain LMG 29417 / CECT 9101 / MAFF 303099) (Mesorhizobium loti (strain MAFF 303099)).